Here is a 250-residue protein sequence, read N- to C-terminus: Isoprenyl transferase (250 aa).

Residue D26 is part of the active site. Position 26 (D26) interacts with Mg(2+). Substrate-binding positions include 27–30, W31, R39, H43, and 71–73; these read GNGR and STE. The Proton acceptor role is filled by N74. Substrate-binding positions include W75, R77, R198, and 204-206; that span reads RLS. E217 provides a ligand contact to Mg(2+).

Belongs to the UPP synthase family. In terms of assembly, homodimer. The cofactor is Mg(2+).

Its function is as follows. Catalyzes the condensation of isopentenyl diphosphate (IPP) with allylic pyrophosphates generating different type of terpenoids. This is Isoprenyl transferase from Streptococcus agalactiae serotype III (strain NEM316).